We begin with the raw amino-acid sequence, 358 residues long: Mannonate dehydratase (358 aa).

The protein belongs to the mannonate dehydratase family. It depends on Fe(2+) as a cofactor. Requires Mn(2+) as cofactor.

The catalysed reaction is D-mannonate = 2-dehydro-3-deoxy-D-gluconate + H2O. It participates in carbohydrate metabolism; pentose and glucuronate interconversion. Its function is as follows. Catalyzes the dehydration of D-mannonate. The chain is Mannonate dehydratase from Lactococcus lactis subsp. lactis (strain IL1403) (Streptococcus lactis).